The chain runs to 247 residues: tRNA uridine(34) hydroxylase (247 aa).

The 95-residue stretch at 124 to 218 (TKQNVIVIDT…YLEDTHNKNN (95 aa)) folds into the Rhodanese domain. The active-site Cysteine persulfide intermediate is Cys-178.

This sequence belongs to the TrhO family.

It carries out the reaction uridine(34) in tRNA + AH2 + O2 = 5-hydroxyuridine(34) in tRNA + A + H2O. In terms of biological role, catalyzes oxygen-dependent 5-hydroxyuridine (ho5U) modification at position 34 in tRNAs. This chain is tRNA uridine(34) hydroxylase, found in Rickettsia typhi (strain ATCC VR-144 / Wilmington).